A 449-amino-acid polypeptide reads, in one-letter code: Xylose isomerase (449 aa).

Residues H103 and D106 contribute to the active site. Mg(2+) is bound by residues E234, E270, H273, D298, D309, D311, and D342.

The protein belongs to the xylose isomerase family. In terms of assembly, homotetramer. Requires Mg(2+) as cofactor.

It is found in the cytoplasm. It catalyses the reaction alpha-D-xylose = alpha-D-xylulofuranose. Functionally, involved in D-xylose catabolism. The polypeptide is Xylose isomerase (xylA) (Lactiplantibacillus pentosus (Lactobacillus pentosus)).